The chain runs to 106 residues: Large ribosomal subunit protein bL21 (106 aa).

The protein belongs to the bacterial ribosomal protein bL21 family. In terms of assembly, part of the 50S ribosomal subunit. Contacts protein L20.

In terms of biological role, this protein binds to 23S rRNA in the presence of protein L20. This chain is Large ribosomal subunit protein bL21, found in Chlamydia caviae (strain ATCC VR-813 / DSM 19441 / 03DC25 / GPIC) (Chlamydophila caviae).